The following is a 462-amino-acid chain: L-seryl-tRNA(Sec) selenium transferase (462 aa).

K292 is modified (N6-(pyridoxal phosphate)lysine).

This sequence belongs to the SelA family. The cofactor is pyridoxal 5'-phosphate.

It is found in the cytoplasm. It catalyses the reaction L-seryl-tRNA(Sec) + selenophosphate + H(+) = L-selenocysteinyl-tRNA(Sec) + phosphate. Its pathway is aminoacyl-tRNA biosynthesis; selenocysteinyl-tRNA(Sec) biosynthesis; selenocysteinyl-tRNA(Sec) from L-seryl-tRNA(Sec) (bacterial route): step 1/1. In terms of biological role, converts seryl-tRNA(Sec) to selenocysteinyl-tRNA(Sec) required for selenoprotein biosynthesis. In Geobacter metallireducens (strain ATCC 53774 / DSM 7210 / GS-15), this protein is L-seryl-tRNA(Sec) selenium transferase.